Here is a 341-residue protein sequence, read N- to C-terminus: RNA 3'-terminal phosphate cyclase (341 aa).

Residues glutamine 102 and 283–287 contribute to the ATP site; that span reads HLADQ. The active-site Tele-AMP-histidine intermediate is histidine 308.

It belongs to the RNA 3'-terminal cyclase family. Type 1 subfamily.

The protein localises to the cytoplasm. The enzyme catalyses a 3'-end 3'-phospho-ribonucleotide-RNA + ATP = a 3'-end 2',3'-cyclophospho-ribonucleotide-RNA + AMP + diphosphate. Functionally, catalyzes the conversion of 3'-phosphate to a 2',3'-cyclic phosphodiester at the end of RNA. The mechanism of action of the enzyme occurs in 3 steps: (A) adenylation of the enzyme by ATP; (B) transfer of adenylate to an RNA-N3'P to produce RNA-N3'PP5'A; (C) and attack of the adjacent 2'-hydroxyl on the 3'-phosphorus in the diester linkage to produce the cyclic end product. The biological role of this enzyme is unknown but it is likely to function in some aspects of cellular RNA processing. The sequence is that of RNA 3'-terminal phosphate cyclase from Pseudomonas aeruginosa (strain LESB58).